We begin with the raw amino-acid sequence, 558 residues long: MSFTRLDKSRKISAPHGTELTTCNWQVEAAKRMLMNNLDDEVAEHPQALVVYGGIGRAARSWECYDKIIETLERLKPDESLLIQSGKPVGVFPTHENAPRVLIANSNLVPEWANWEHFNELDKKGLMMYGQMTAGSWIYIGSQGIVQGTYETFGSVSRQHFNGDAKGKWVLTGGLGGMGGAQPLAATMAGFCMLAVECDESRIDFRLRTGYVDHKATNLDDALKLINDAMAKGEAISVGLLGNAADVYSELQQQGVTPDVVTDQTSAHDPLHGYLPQGWTLEEYKAKQESDATGTVNAAKESMAVQVRAMLHFQKEGAAVLDYGNNIRQMAKDVGVDNAFDFPGFVPAYIRPLFCEGIGPFRWVALSGDPEDIYKTDEKVKELIPDNEHLHNWLDMAKERISFQGLPSRICWIGLKDRARIARAFNDMVKSGELKAPVVIGRDHLDSGSVASPNRETEAMQDGSDAVSDWPLLNALLNTAGGATWVSLHHGGGVGMGYSQHAGVVIVADGTEEADKRLGRVLWNDPGTGVMRHADAGYDIAKNCAREQGLDLPMLDTK.

NAD(+)-binding positions include 53–54, Gln-131, 177–179, Glu-197, Arg-202, 243–244, 264–268, 274–275, and Tyr-323; these read GG, GMG, NA, QTSAH, and YL. The active site involves Cys-411. Gly-493 is an NAD(+) binding site.

It belongs to the urocanase family. Requires NAD(+) as cofactor.

Its subcellular location is the cytoplasm. The catalysed reaction is 4-imidazolone-5-propanoate = trans-urocanate + H2O. Its pathway is amino-acid degradation; L-histidine degradation into L-glutamate; N-formimidoyl-L-glutamate from L-histidine: step 2/3. Catalyzes the conversion of urocanate to 4-imidazolone-5-propionate. The chain is Urocanate hydratase from Idiomarina loihiensis (strain ATCC BAA-735 / DSM 15497 / L2-TR).